The primary structure comprises 79 residues: Cytochrome c oxidase assembly factor 6 homolog (79 aa).

In terms of domain architecture, CHCH spans 9–52 (RQACWGARDLYWRCLDDNAEDAARCQKLRSSFEASCPQQWIKYF). A Cx9C motif motif is present at residues 12–22 (CWGARDLYWRC). 2 disulfides stabilise this stretch: cysteine 12/cysteine 44 and cysteine 22/cysteine 33. The Cx10C motif motif lies at 33-44 (CQKLRSSFEASC).

This sequence belongs to the cytochrome c oxidase subunit 6B family. As to quaternary structure, found in a complex with TMEM177, COX20, MT-CO2/COX2, COX18, SCO1 and SCO2. Interacts with COA1, MT-CO2/COX2, SCO1, SCO2 and COX20. Interacts with COX20 in a MT-CO2/COX2- and COX18-dependent manner. Interacts with COX16.

The protein resides in the mitochondrion. It localises to the mitochondrion intermembrane space. Functionally, involved in the maturation of the mitochondrial respiratory chain complex IV subunit MT-CO2/COX2. Thereby, may regulate early steps of complex IV assembly. Mitochondrial respiratory chain complex IV or cytochrome c oxidase is the component of the respiratory chain that catalyzes the transfer of electrons from intermembrane space cytochrome c to molecular oxygen in the matrix and as a consequence contributes to the proton gradient involved in mitochondrial ATP synthesis. May also be required for efficient formation of respiratory supercomplexes comprised of complexes III and IV. This Mus musculus (Mouse) protein is Cytochrome c oxidase assembly factor 6 homolog (Coa6).